Reading from the N-terminus, the 3166-residue chain is MVFESVVVEVLNRFLGDYVVNLDESQLSLGIWKGAVALKNLVIKENALHELDVPFKVKVGHIGSLKLKIPWKNLYTQPVEAVLEEIFLLIVPSSRIQYDPIKEEKQLMETKQQELKRIEKAKQKVFDKEKPREEKQDTFTEKLVTQIIQNLQVQISSIHIRYEDDITNGDKPLSFGISLQNISLQTTDQYWIPCLHDNTEKLVRKLIRLDNLFAYWNVNSEMFYLNDYDESLKALKNGIVNENIVPEGYDFVFRPISASAKLQMNRRSDFDFSDPKINLAVDLHTIAIEFNKPQYFSLMELLESIDMMTQNQPYRKFKPSVPLHLHAKEWWAYAIHSILEVNVCPSLRMWSWEHIRNHRYKMKRYREFYKKKLTSKKPSPEILMSLEELEKTLDVFNITIARQQAEVEAKKAGYKIYKEGVKDPEDNAGWFGWLWTWSESNANQQQDVKPGILEEMLTPEEKSLLYEAIGYSETAVDPTLPKTFEALKFFVHLKSMSIVLRENHQKPELLNVVVEGLSTSVVQRPGAQAIKFETKIDSFHITGLPDDFKKPHLLSSLDDTSLLQITFEINPLNETVAQRCTIEAEPLEIIYDARTVNSIVEFFRPPKDVHLAQLTSVTLTKLEEFRAKTATGLLYVIETQKVLDLRINVKASYVIVPQYGNFSPTSNLLLLDLGHLKVSSKRRSLLPDVRPSEASLEDIMHRAYDSFDIQLTSIQLLYSRVGDNWKEARKLNVSTQHILIPMHVNVELSKAMVFMDIKMPKFKISGKLPLVSLRISDKKLQGIMELLGSIPKPEPVTDVSAPARSFQIQASALPVSHISQKLIPLLEQPVTEDDSEEEFFDAPCSPLEECPQVSCRDKCTRQKKLQKKDCVMNLIQLRMRFEVAEVSIQFYHLVGDCELPVLEMGALGLGTEAEFRTFDLKGSAFLKELWLKCPEYLDENKKPVYLITTLDNTMEDLLTLEFMKVEKNAPNLNSTYNNVLQLIKVNFSSLDIHLHTEALLNTMNYLNNILPELREKSASVSAAEPEDKGDIIKKLALKLPTNEDIITLQLLAELSCLQIFIQDQKQNISEIKIEGLDSEMIMKPLVTEINAKLRNIIVLDSDKMAIYKKALYITGKEVFSFKMISYMDATAGYAYTDMSVVDIRVHLTVGCIEVVFITKFLYSILAFIDNFQAVKDALAEATVQAAEMAADGVKELARKSSRFALDVNIKAPVVLIPQSPVSQNVFVADFGLITMKNIFVTVTETQSNIPPVIDLITIKLSKMRLYRSQFRNDTYQEVLDLLLPLNLEVIVERNLSWEWYKEVPCFNIKAQLKPMEFILSQEDLTTVFQTLHGNIWYGQDLSAPSSANKDPETMTSGVTSPPDHSPATVVTAAVVEVHPQASQAHTMLNVSFQTDYLTMALYSPGPDEASFTDVRDPSLELAEFKLENIISSLKIYTDDSTVFSFSVKNCILDDKRSHVMKATPRMIGLTVGFDKKDMVDIKYRKIKTFVVTDAVVQEMYVCASVEFLMTVAHIFFDAYMTSTALETSVQTRTTREAPAQELGKWEMNILIKNPEIVFVADMTRNDAPALVITTQCEICCKGEPTSNTVTAAIKDLQVRACPFLPVKRKGKVTTVLQPCDLFYQATQLGRDPQMIDISVKSLTLKVSPVIINTIITITSALYTTKETVPEENTSNIAHLWDKKDTKNLKMWFLEESNESEKVVPTNEVMPGGETLNLRIDSIFIVLEAGIGHRTVPMLLAKACFSGESKNWLSLINLHCHLELEVHYYNEMFGVWEPLLEPLEIDQTDDFRPWNLGIKMKKKAKEAIVESDSEAENYKVPEYKTAISFYSRDQLNITLSKCGLVMLNNLVEAFTEAATGSSSVFLRDLAPFMIFNSLGLTVSVSPSDSFSVLNVPLAKSYELKNDESLSMDYVRTKDNDHFNAMTSLSSKLFFILLTPANHSVADKIPLTKVGRRLYTVRHRESGVERSIICQIDTVEGSKKVTIRSPVQIKNHFSIPISVFEGDTLLGIASPENEFNIPLASYRSSLSLVPEDQDYQLCEGIDFEEIIKYDGQLLKKKCRSTNPSKKSFVINIVPEKDNLASLSVYSEDGWDLPYVLHLWPPILIRNLLPYKVAYYIEGIENTVVTLSEGHSSQIYNVEMDQAKLHLKLLDYLNHDWKSEFYIRSSQQDINFINFTCLTEMEKSDLDIAIHMTYNTGQTVVAFHSPYWMVNKTNRMLQYKADGIHRKHPPNYTKPVLFSFQPNHFFNNNKVQLMVTDSELSDQFSIDTVGSHGAIRCKGLKMEYQVGVTINLSSFNITRIVTFIPFYMIKNKSKYHISVAEEGSDKWLSLDLEQSIPFWPENASNILLIQVERSEDPPKRIYFNKQDNCILLRLNNELGGIIAEVNLAEHSTVITFSDYHDGAATFLLINHTKSDPVQYNQSSLGEIEDSLPPGKAVYYTWADPVGSRKLKWSCGQSYGEVTHKDDMMTPISVGKKTIYLVSFFEGLQRIILFTEDPRVFKVTYESEKAELAELEVVLALQDVGISLVNNYTKQEVAYIGITSSDVVWEAKPKKKARWKPMSVKHTEKLEKEFREYTEASPLEDKVVELDNIPVRLTPSGNDMKILQPHVIPVRRNYLPALKVEYNTSAHQSSFRIQIYRIQIQNQIHGAIFPFVFYPIKPPRSVTMDSAPKPFTDVSIVMRSAGHSQISRIKYFKVLIQEMDLSLDLGFVYALADLVTKAEVTEKTEVEHFHKDVEAFEQEYEVVSSVDQSQVNLFEYFHISPIKLHLSVSLSSGRDEAKDSEQHGGLIPVHSLNLLLKSIGATLTDVQDVVFKLAFFELNYQFHTTSELQSEVIRHYSKQAIKQMYVLILGLDVLGNPFGLIREFSEGVEAFFYEPYQGAIQGPEEFVEGMALGLKALVGGAVGGLAGAASKITSAMAKGVAAMTMDEDYQQKRREAMNKQPAGLREGITRGGKGLVSGFVSGITGIVTKPIKGAQKEGAAGFFKGVGKGLVGAVTRPTGGIIDMASSTFQGIKRATETSEVESLRPPRFFNEDGVIRPYRLRDGSGNQMLQVMENGRFAKYKYFTHVMINKTDMFMITRRGVLFVTKGTFGQLTCEWQYTFDEFTKEPFIVHGRRLRIEAKERVKSVFHAKEFGKIVNFKTPEDARWILTKLEEAREPSPRL.

Residues 3 to 116 (FESVVVEVLN…LMETKQQELK (114 aa)) form the Chorein N-terminal domain. 2 TPR repeats span residues 212-245 (LFAY…ENIV) and 373-406 (LTSK…QQAE). At Thr-831 the chain carries Phosphothreonine. Ser-835 carries the post-translational modification Phosphoserine. The short motif at 838 to 844 (EFFDAPC) is the FFAT element. Over residues 1343–1359 (APSSANKDPETMTSGVT) the composition is skewed to polar residues. Residues 1343–1365 (APSSANKDPETMTSGVTSPPDHS) are disordered. Ser-1410 carries the post-translational modification Phosphoserine. 2 TPR repeats span residues 1806–1840 (AIVE…TLSK) and 1999–2034 (ISVF…VPED). One can recognise an SHR-BD domain in the interval 2202 to 2447 (VAFHSPYWMV…VYYTWADPVG (246 aa)). Required for mitochondrial localization regions lie at residues 2607–3166 (LQPH…SPRL) and 2743–3166 (EYEV…SPRL). 2 TPR repeats span residues 2716-2750 (ADLV…VSSV) and 2852-2890 (ILGL…PEEF). Residues 2945-3019 (PAGLREGITR…SSTFQGIKRA (75 aa)) are required for lipid droplet localization.

This sequence belongs to the VPS13 family. As to quaternary structure, interacts (via FFAT motif) with VAPA and VAPB. Interacts with RAB7A. Interacts with XK.

The protein resides in the mitochondrion outer membrane. The protein localises to the endoplasmic reticulum membrane. It localises to the endosome membrane. It is found in the lysosome membrane. Its subcellular location is the lipid droplet. The protein resides in the golgi apparatus. The protein localises to the cytoplasmic vesicle. It localises to the secretory vesicle. It is found in the neuronal dense core vesicle. Mediates the transfer of lipids between membranes at organelle contact sites. Required for the formation or stabilization of ER-mitochondria contact sites which enable transfer of lipids between the ER and mitochondria. Negatively regulates lipid droplet size and motility. Required for efficient lysosomal protein degradation. In Mus musculus (Mouse), this protein is Intermembrane lipid transfer protein VPS13A.